A 390-amino-acid polypeptide reads, in one-letter code: Probable tRNA sulfurtransferase (390 aa).

Residues 60 to 162 (KQIIDDLKEV…YDCAIVYGHK (103 aa)) form the THUMP domain. Residues 180 to 181 (LL), 205 to 206 (TF), Arg-264, Gly-286, and Gln-295 each bind ATP.

It belongs to the ThiI family.

Its subcellular location is the cytoplasm. It carries out the reaction [ThiI sulfur-carrier protein]-S-sulfanyl-L-cysteine + a uridine in tRNA + 2 reduced [2Fe-2S]-[ferredoxin] + ATP + H(+) = [ThiI sulfur-carrier protein]-L-cysteine + a 4-thiouridine in tRNA + 2 oxidized [2Fe-2S]-[ferredoxin] + AMP + diphosphate. The enzyme catalyses [ThiS sulfur-carrier protein]-C-terminal Gly-Gly-AMP + S-sulfanyl-L-cysteinyl-[cysteine desulfurase] + AH2 = [ThiS sulfur-carrier protein]-C-terminal-Gly-aminoethanethioate + L-cysteinyl-[cysteine desulfurase] + A + AMP + 2 H(+). The protein operates within cofactor biosynthesis; thiamine diphosphate biosynthesis. Its function is as follows. Catalyzes the ATP-dependent transfer of a sulfur to tRNA to produce 4-thiouridine in position 8 of tRNAs, which functions as a near-UV photosensor. Also catalyzes the transfer of sulfur to the sulfur carrier protein ThiS, forming ThiS-thiocarboxylate. This is a step in the synthesis of thiazole, in the thiamine biosynthesis pathway. The sulfur is donated as persulfide by IscS. The protein is Probable tRNA sulfurtransferase of Ureaplasma parvum serovar 3 (strain ATCC 27815 / 27 / NCTC 11736).